Here is a 623-residue protein sequence, read N- to C-terminus: Glutathione import ATP-binding protein GsiA (623 aa).

ABC transporter domains lie at 15 to 269 (VSGL…QTLL) and 325 to 564 (LRSG…RKLM). ATP-binding positions include 49 to 56 (GESGSGKS) and 357 to 364 (GESGSGKS).

The protein belongs to the ABC transporter superfamily. Glutathione importer (TC 3.A.1.5.11) family. As to quaternary structure, the complex is composed of two ATP-binding proteins (GsiA), two transmembrane proteins (GsiC and GsiD) and a solute-binding protein (GsiB).

Its subcellular location is the cell inner membrane. It catalyses the reaction glutathione(out) + ATP + H2O = glutathione(in) + ADP + phosphate + H(+). Functionally, part of the ABC transporter complex GsiABCD involved in glutathione import. Responsible for energy coupling to the transport system. The chain is Glutathione import ATP-binding protein GsiA from Salmonella typhimurium (strain LT2 / SGSC1412 / ATCC 700720).